We begin with the raw amino-acid sequence, 280 residues long: Ycf3-interacting protein 1, chloroplastic (280 aa).

A chloroplast-targeting transit peptide spans 1 to 62 (MTTQIFQLPL…NNRRFGSLIV (62 aa)). The segment at 75 to 103 (PVPLTLEQQEKEKQNRDDEEDEIDEGDVD) is disordered. Residues 91–103 (DDEEDEIDEGDVD) show a composition bias toward acidic residues. Residues 255–275 (ALYFVSALPVIIGISVVLILF) traverse the membrane as a helical segment.

Belongs to the Y3IP1/CEST family. In terms of assembly, interacts with Ycf3. As to expression, expressed in cotyledons, rosette and cauline leaves, stems and sepals.

It localises to the plastid. It is found in the chloroplast thylakoid membrane. Its function is as follows. Nuclear genome-encoded factor that participates in photosystem I (PSI) biogenesis. Cooperates with the plastid genome-encoded protein PSI assembly Ycf3 in the assembly of stable PSI units in the thylakoid membrane. Involved in light-induced chloroplast development and growth. Involved in the plant response to abiotic and photooxidative stresses. May be involved in the suppression of photooxidative damage. This chain is Ycf3-interacting protein 1, chloroplastic, found in Arabidopsis thaliana (Mouse-ear cress).